The sequence spans 162 residues: Large ribosomal subunit protein uL10 (162 aa).

This sequence belongs to the universal ribosomal protein uL10 family. Part of the ribosomal stalk of the 50S ribosomal subunit. The N-terminus interacts with L11 and the large rRNA to form the base of the stalk. The C-terminus forms an elongated spine to which L12 dimers bind in a sequential fashion forming a multimeric L10(L12)X complex.

Forms part of the ribosomal stalk, playing a central role in the interaction of the ribosome with GTP-bound translation factors. This chain is Large ribosomal subunit protein uL10, found in Aliarcobacter butzleri (strain RM4018) (Arcobacter butzleri).